A 164-amino-acid polypeptide reads, in one-letter code: Transcription elongation factor GreA (164 aa).

Belongs to the GreA/GreB family.

Necessary for efficient RNA polymerase transcription elongation past template-encoded arresting sites. The arresting sites in DNA have the property of trapping a certain fraction of elongating RNA polymerases that pass through, resulting in locked ternary complexes. Cleavage of the nascent transcript by cleavage factors such as GreA or GreB allows the resumption of elongation from the new 3'terminus. GreA releases sequences of 2 to 3 nucleotides. This is Transcription elongation factor GreA from Helicobacter acinonychis (strain Sheeba).